Reading from the N-terminus, the 222-residue chain is Capsular polysaccharide type 5 biosynthesis protein cap5A (222 aa).

Helical transmembrane passes span 20–40 and 172–192; these read ILIILPLLFLIISAIVTFFVL and VVNLIGAFFLGLVVALIYIFF.

Belongs to the CpsC/CapA family.

It localises to the cell membrane. Functionally, required for the biosynthesis of type 5 capsular polysaccharide (Cap5/CP5). Might act as the chain-length regulator. This chain is Capsular polysaccharide type 5 biosynthesis protein cap5A (cap5A), found in Staphylococcus aureus (strain Newman).